A 289-amino-acid chain; its full sequence is Ribosomal RNA small subunit methyltransferase I (289 aa).

It belongs to the methyltransferase superfamily. RsmI family.

The protein resides in the cytoplasm. It catalyses the reaction cytidine(1402) in 16S rRNA + S-adenosyl-L-methionine = 2'-O-methylcytidine(1402) in 16S rRNA + S-adenosyl-L-homocysteine + H(+). In terms of biological role, catalyzes the 2'-O-methylation of the ribose of cytidine 1402 (C1402) in 16S rRNA. The protein is Ribosomal RNA small subunit methyltransferase I of Halalkalibacterium halodurans (strain ATCC BAA-125 / DSM 18197 / FERM 7344 / JCM 9153 / C-125) (Bacillus halodurans).